The sequence spans 161 residues: Probable ribosome biogenesis protein RLP24 (161 aa).

Belongs to the eukaryotic ribosomal protein eL24 family. Associated with nucleolar and cytoplasmic pre-60S particles. At the end of biogenesis it dissociates from cytoplasmic pre-60S particles and is likely to be exchanged for its ribosomal homolog, RPL24.

Its subcellular location is the nucleus. The protein resides in the nucleolus. Functionally, involved in the biogenesis of the 60S ribosomal subunit. Ensures the docking of GTPBP4/NOG1 to pre-60S particles. The chain is Probable ribosome biogenesis protein RLP24 (rsl24d1) from Danio rerio (Zebrafish).